A 469-amino-acid chain; its full sequence is Glutamate--tRNA ligase (469 aa).

The 'HIGH' region motif lies at 9–19 (PSPTGFLHVGG). Zn(2+) contacts are provided by cysteine 98, cysteine 100, cysteine 125, and aspartate 127. The short motif at 236-240 (KLSKR) is the 'KMSKS' region element. An ATP-binding site is contributed by lysine 239.

It belongs to the class-I aminoacyl-tRNA synthetase family. Glutamate--tRNA ligase type 1 subfamily. Monomer. Requires Zn(2+) as cofactor.

Its subcellular location is the cytoplasm. It carries out the reaction tRNA(Glu) + L-glutamate + ATP = L-glutamyl-tRNA(Glu) + AMP + diphosphate. In terms of biological role, catalyzes the attachment of glutamate to tRNA(Glu) in a two-step reaction: glutamate is first activated by ATP to form Glu-AMP and then transferred to the acceptor end of tRNA(Glu). This is Glutamate--tRNA ligase from Shewanella sediminis (strain HAW-EB3).